The primary structure comprises 36 residues: Photosystem I reaction center subunit VIII (36 aa).

Residues 8-28 form a helical membrane-spanning segment; it reads SIFVPLVGLVFPAIAIASLFL.

It belongs to the PsaI family.

It localises to the plastid. The protein localises to the chloroplast thylakoid membrane. In terms of biological role, may help in the organization of the PsaL subunit. The chain is Photosystem I reaction center subunit VIII from Jasminum nudiflorum (Winter jasmine).